A 202-amino-acid chain; its full sequence is MSRYRGPRLRVTRRLGELPGLTRKASKKSNPPGQHGQARRKRSEYAIRLEEKQKLRFNYGVSERQLVRYVKKARAQEGSTGTNLLRLLENRLDNVCFRLGFGGTIPGSRQLVNHGHVTVNGKVLDIAGYQCKSGDVISIKEKKASKKLVEGNIEFPGLANVPPHIELDKPKLTGKINGKCDREWVALEINELLVVEYYSRKV.

The span at 1-13 shows a compositional bias: basic residues; that stretch reads MSRYRGPRLRVTR. The disordered stretch occupies residues 1–42; it reads MSRYRGPRLRVTRRLGELPGLTRKASKKSNPPGQHGQARRKR. In terms of domain architecture, S4 RNA-binding spans 90–152; that stretch reads NRLDNVCFRL…KASKKLVEGN (63 aa).

The protein belongs to the universal ribosomal protein uS4 family. As to quaternary structure, part of the 30S ribosomal subunit. Contacts protein S5. The interaction surface between S4 and S5 is involved in control of translational fidelity.

Functionally, one of the primary rRNA binding proteins, it binds directly to 16S rRNA where it nucleates assembly of the body of the 30S subunit. Its function is as follows. With S5 and S12 plays an important role in translational accuracy. The chain is Small ribosomal subunit protein uS4 from Prochlorococcus marinus (strain MIT 9515).